We begin with the raw amino-acid sequence, 478 residues long: Shikimate biosynthesis protein AroDE (478 aa).

The 3-dehydroquinate dehydratase stretch occupies residues 1–208; that stretch reads MLCTTISGPS…LKHHYFYNFA (208 aa). 3-dehydroquinate-binding positions include S21, 29–31, and 55–57; these read EMR and AWK. Catalysis depends on H110, which acts as the Proton donor/acceptor; for 3-dehydroquinate dehydratase activity. K133 (schiff-base intermediate with substrate; for 3-dehydroquinate dehydratase activity) is an active-site residue. 3-dehydroquinate is bound by residues R171 and Q196. The shikimate 5-dehydrogenase stretch occupies residues 209-478; it reads SLSAQSPICA…VLASLFSIAP (270 aa). Position 226-228 (226-228) interacts with shikimate; the sequence is SIG. K277 (proton acceptor; for shikimate dehydrogenase activity) is an active-site residue. Residues N298 and D313 each contribute to the shikimate site. NADP(+) contacts are provided by residues 337–341, 360–362, and G435; these read GAGGA and NRT. Q442 serves as a coordination point for shikimate.

In the N-terminal section; belongs to the type-I 3-dehydroquinase family. It in the C-terminal section; belongs to the shikimate dehydrogenase family.

It catalyses the reaction 3-dehydroquinate = 3-dehydroshikimate + H2O. It carries out the reaction shikimate + NADP(+) = 3-dehydroshikimate + NADPH + H(+). It functions in the pathway metabolic intermediate biosynthesis; chorismate biosynthesis; chorismate from D-erythrose 4-phosphate and phosphoenolpyruvate: step 3/7. It participates in metabolic intermediate biosynthesis; chorismate biosynthesis; chorismate from D-erythrose 4-phosphate and phosphoenolpyruvate: step 4/7. In terms of biological role, bifunctional enzyme that catalyzes two sequential steps of the aromatic amino acids biosynthetic pathway. In the first reaction, the AroD domain catalyzes the cis-dehydration of 3-dehydroquinate (DHQ) and introduces the first double bond of the aromatic ring to yield 3-dehydroshikimate; in the second reaction, the AroE domain catalyzes the reversible NADPH linked reduction of 3-dehydroshikimate (DHSA) to yield shikimate (SA). This is Shikimate biosynthesis protein AroDE from Chlamydia trachomatis serovar D (strain ATCC VR-885 / DSM 19411 / UW-3/Cx).